Reading from the N-terminus, the 231-residue chain is Small ribosomal subunit protein uS3 (231 aa).

The KH type-2 domain occupies 39–107 (IRELLHKELK…DVVINIVEIR (69 aa)).

The protein belongs to the universal ribosomal protein uS3 family. In terms of assembly, part of the 30S ribosomal subunit. Forms a tight complex with proteins S10 and S14.

In terms of biological role, binds the lower part of the 30S subunit head. Binds mRNA in the 70S ribosome, positioning it for translation. The chain is Small ribosomal subunit protein uS3 from Nitrobacter hamburgensis (strain DSM 10229 / NCIMB 13809 / X14).